The primary structure comprises 478 residues: Quinoprotein glucose dehydrogenase B (478 aa).

An N-terminal signal peptide occupies residues 1 to 24; it reads MNKHLLAKIALLSAVQLVTLSAFA. D-glucose-binding residues include glutamine 100 and aspartate 167. Histidine 168 acts as the Proton acceptor in catalysis. D-glucose is bound by residues glutamine 192 and arginine 252. The PQQ stretch occupies residues 252 to 253; that stretch reads RN. Ca(2+)-binding residues include glycine 271, proline 272, glutamate 277, tyrosine 287, alanine 293, tyrosine 295, aspartate 297, and glutamate 333. Pyrroloquinoline quinone is bound by residues tyrosine 367, threonine 372, and lysine 401. The interval 430 to 432 is PQQ; the sequence is RYR.

It belongs to the PQQ oxidoreductase GdhB family. Homodimer. Pyrroloquinoline quinone serves as cofactor. Ca(2+) is required as a cofactor.

The catalysed reaction is a ubiquinone + D-glucose = D-glucono-1,5-lactone + a ubiquinol. Functionally, oxidizes glucose to gluconolactone. The sequence is that of Quinoprotein glucose dehydrogenase B (gdhB) from Acinetobacter calcoaceticus.